Reading from the N-terminus, the 234-residue chain is Sperm flagellar protein 1 (234 aa).

Positions 7-112 (EEALHQLYLW…VLIPLRQRLE (106 aa)) constitute a Calponin-homology (CH) domain. An essential for homodimerization and microtubule bundling activity region spans residues 181–234 (VLQIAEKEQELLASQETVQVLQMKVKRLEHLLQLKNVRIDDLSRRLQQAERKQR).

In terms of assembly, homodimer. Interacts with actin, TJP1, CGN and CDH1. As to expression, expressed predominantly in the seminiferous epithelium of adult testis. Expressed in pillar cells of the organ of Corti (at protein level). Expressed in brain, kidney, lung and testis. Highly expressed in the trachea, lung and oviduct.

It localises to the cytoplasm. It is found in the cell projection. Its subcellular location is the cilium. The protein localises to the flagellum. The protein resides in the cytoskeleton. It localises to the cilium axoneme. It is found in the apical cell membrane. Its subcellular location is the basolateral cell membrane. The protein localises to the stress fiber. The protein resides in the microvillus. It localises to the lamellipodium. It is found in the filopodium. Microtubule-associated protein that promotes microtubule bundling and stabilizes microtubules against depolymerization in response to cold shock. Microtubule-associated protein involved in the stabilization of microtubules along the axis of migration during radial intercalation. Promotes the establishment and stabilization of an axis of microtubules required for the active migration of cells into the outer epithelium. Essential for ciliary central apparatus formation which requires both its microtubule-binding and bundling activities and for ciliary localization of HYDIN and SPAG6 in ependymal cilia. Binds actin in intestinal epithelial cells (IECs), essential for IECs survival and contributes to formation of filopodia and lamellipodia in migrating IECs. Regulates planar cell polarity signaling pathway and asymmetric microtubule accumulation in ciliated epithelia. This Mus musculus (Mouse) protein is Sperm flagellar protein 1 (Spef1).